The sequence spans 526 residues: Light-independent protochlorophyllide reductase subunit B (526 aa).

Residue Asp36 participates in [4Fe-4S] cluster binding. Asp284 (proton donor) is an active-site residue. 419–420 is a binding site for substrate; sequence GL.

The protein belongs to the ChlB/BchB/BchZ family. In terms of assembly, protochlorophyllide reductase is composed of three subunits; BchL, BchN and BchB. Forms a heterotetramer of two BchB and two BchN subunits. It depends on [4Fe-4S] cluster as a cofactor.

It catalyses the reaction chlorophyllide a + oxidized 2[4Fe-4S]-[ferredoxin] + 2 ADP + 2 phosphate = protochlorophyllide a + reduced 2[4Fe-4S]-[ferredoxin] + 2 ATP + 2 H2O. It participates in porphyrin-containing compound metabolism; bacteriochlorophyll biosynthesis (light-independent). Functionally, component of the dark-operative protochlorophyllide reductase (DPOR) that uses Mg-ATP and reduced ferredoxin to reduce ring D of protochlorophyllide (Pchlide) to form chlorophyllide a (Chlide). This reaction is light-independent. The NB-protein (BchN-BchB) is the catalytic component of the complex. This is Light-independent protochlorophyllide reductase subunit B from Halorhodospira halophila (strain DSM 244 / SL1) (Ectothiorhodospira halophila (strain DSM 244 / SL1)).